Consider the following 493-residue polypeptide: D-glyceraldehyde dehydrogenase (NADP(+)) (493 aa).

NADP(+) contacts are provided by residues 144 to 147 (TPWN), Arg155, 170 to 174 (KPSSD), 202 to 208 (KGSEIGD), 223 to 246 (GSTSTGQRIMEKASKNMAKLILEL), Cys279, and 379 to 381 (EIF). Substrate is bound by residues Asn147 and Arg155. Residue Glu245 is the Proton acceptor of the active site. Residue Cys279 coordinates substrate. The active-site Proton donor is Cys279.

It belongs to the aldehyde dehydrogenase family. Glyceraldehyde dehydrogenase subfamily. As to quaternary structure, homotetramer. Dimer of dimers.

The enzyme catalyses D-glyceraldehyde + NADP(+) + H2O = (R)-glycerate + NADPH + 2 H(+). The protein operates within carbohydrate degradation; glycolysis. Stable for 2 hours at 60 degrees Celsius but activity is decreased to less than 50 percent within 15 minutes at 70 degrees Celsius. Its function is as follows. NADP-dependent dehydrogenase of the nED (non-phosphorylated Entner-Doudoroff) pathway with highest activity towards glyceraldehydes (e.g. D,L-glyceraldehyde and D-glyceraldehyde), to a lesser extent towards D,L-glyceraldehyde-3-phosphate and glycolaldehyde, but no activity towards aliphatic or aromatic aldehydes. The protein is D-glyceraldehyde dehydrogenase (NADP(+)) of Picrophilus torridus (strain ATCC 700027 / DSM 9790 / JCM 10055 / NBRC 100828 / KAW 2/3).